A 231-amino-acid chain; its full sequence is Uracil-DNA glycosylase (231 aa).

Catalysis depends on Asp-70, which acts as the Proton acceptor.

This sequence belongs to the uracil-DNA glycosylase (UDG) superfamily. UNG family.

It is found in the cytoplasm. It carries out the reaction Hydrolyzes single-stranded DNA or mismatched double-stranded DNA and polynucleotides, releasing free uracil.. Its function is as follows. Excises uracil residues from the DNA which can arise as a result of misincorporation of dUMP residues by DNA polymerase or due to deamination of cytosine. The protein is Uracil-DNA glycosylase of Pseudomonas fluorescens (strain Pf0-1).